The primary structure comprises 169 residues: uncharacterized protein (169 aa).

Ser-165 is subject to Phosphoserine.

This is an uncharacterized protein from Drosophila melanogaster (Fruit fly).